Here is a 367-residue protein sequence, read N- to C-terminus: D-alanine--D-alanine ligase (367 aa).

The 210-residue stretch at 148–357 (KMAFEQAGLP…FPELVDKLVQ (210 aa)) folds into the ATP-grasp domain. Residue 184-239 (EASLGYPCFVKPANLGSSVGISKVRSRQELEDALDNAANYDRRIIVEAGVVAREVE) coordinates ATP. D310, E324, and N326 together coordinate Mg(2+).

This sequence belongs to the D-alanine--D-alanine ligase family. Mg(2+) is required as a cofactor. The cofactor is Mn(2+).

The protein localises to the cytoplasm. It carries out the reaction 2 D-alanine + ATP = D-alanyl-D-alanine + ADP + phosphate + H(+). Its pathway is cell wall biogenesis; peptidoglycan biosynthesis. Cell wall formation. The sequence is that of D-alanine--D-alanine ligase from Trichormus variabilis (strain ATCC 29413 / PCC 7937) (Anabaena variabilis).